Here is a 342-residue protein sequence, read N- to C-terminus: Ferredoxin--NADP reductase (342 aa).

FAD-binding residues include Cys17, Asp36, Gln44, Tyr49, Ile89, Phe124, Asp289, and Thr330.

It belongs to the ferredoxin--NADP reductase type 2 family. As to quaternary structure, homodimer. FAD is required as a cofactor.

It carries out the reaction 2 reduced [2Fe-2S]-[ferredoxin] + NADP(+) + H(+) = 2 oxidized [2Fe-2S]-[ferredoxin] + NADPH. This Rhodopseudomonas palustris (strain BisB18) protein is Ferredoxin--NADP reductase.